The sequence spans 404 residues: Caspase b (404 aa).

The propeptide occupies 1–171 (MEDITQLLSD…DIYTPRSGTQ (171 aa)). Residues 8-80 (LSDVLEDLVE…LRKIKQNERA (73 aa)) form the Pyrin domain. Residues histidine 249 and cysteine 296 contribute to the active site. A propeptide spanning residues 301-316 (SSGVLAQDSVFASDSW) is cleaved from the precursor.

This sequence belongs to the peptidase C14A family. As to quaternary structure, upon direct LPS-binding, forms large homooligomers, resulting in its activation. These oligomers are often referred to as 'non-canonical inflammasomes'. Heterotetramer that consists of two anti-parallel arranged heterodimers, each one formed by a 20 kDa (p20) and a 10 kDa (p10) subunit. Interacts with caspa. Interacts with pycard; the interaction only occurs in the presence of nlrp1. Component of NLRP1 inflammasomes. Inflammasomes are supramolecular complexes that assemble in the cytosol in response to pathogens and other damage-associated signals and play critical roles in innate immunity and inflammation. The NLRP1 inflammasome is composed of the signal sensor nlrp1, and the adapter pycard (asc), which recruit effector pro-inflammatory caspases caspa and/or caspb. The interaction between nlrp1 and pycard is required for the sequential recruitment of caspa and then caspb. Caspa is preferentially recruited first and this causes the cleavage of pro-il1b into the midformed il1b. This is followed by the recruitment of caspb, which is activated and cleaves the midformed il1b resulting in il1b maturation. The two subunits are derived from the precursor sequence by an autocatalytic mechanism. As to expression, expressed in the spleen, kidney and liver, and highly expressed in the gills and gut.

It is found in the inflammasome. Its subcellular location is the cytoplasm. The catalysed reaction is Strict requirement for Asp at the P1 position. It has a preferred cleavage sequence of Tyr-Val-Ala-Asp-|- but also cleaves at Asp-Glu-Val-Asp-|-.. With respect to regulation, activated by homooligomerization induced by direct binding to cytosolic LPS. In terms of biological role, thiol protease which cleaves IL-1 beta (il1b), releasing the mature cytokine which is involved in a variety of inflammatory processes, and mediates apoptosis. Component of the NLRP1 inflammasome, which plays a crucial role in innate immunity and inflammation. In response to pathogens and other damage-associated signals, recruited to the NLRP1 inflammasome in its precursor form following the recruitment of caspase caspa. Its subsequent activation causes the cleavage of the midformed pro-il1b and results in il1b maturation and secretion in the extracellular milieu. Activated by direct binding to bacterial lipopolysaccharides (LPS), which causes non-canonical inflammasome activation and results in the pyroptosis of infected cells and their extrusion into the gut lumen, as well as in cytokine secretion. Plays a crucial role in the restriction of bacterial infection to intestinal sites. Pyroptosis limits bacterial replication, while cytokine secretion promotes the recruitment and activation of immune cells and triggers mucosal inflammation. Promotes pyroptosis by bacterial infection by E.piscicida. The chain is Caspase b from Danio rerio (Zebrafish).